The sequence spans 361 residues: D-alanine--D-alanine ligase (361 aa).

Residues 139 to 336 (KLLLKEKEIS…FSQIIDNMIN (198 aa)) enclose the ATP-grasp domain. ATP is bound at residue 167 to 222 (EKNLGYPMIVKPARLGSSIGVSKVVDRKNFEEAVKNVLLFDNKVLVEKWINAREIN). Asp-296, Glu-307, and Asn-309 together coordinate Mg(2+).

This sequence belongs to the D-alanine--D-alanine ligase family. Mg(2+) serves as cofactor. The cofactor is Mn(2+).

The protein resides in the cytoplasm. The catalysed reaction is 2 D-alanine + ATP = D-alanyl-D-alanine + ADP + phosphate + H(+). It functions in the pathway cell wall biogenesis; peptidoglycan biosynthesis. Its function is as follows. Cell wall formation. The chain is D-alanine--D-alanine ligase from Thermosipho melanesiensis (strain DSM 12029 / CIP 104789 / BI429).